A 474-amino-acid chain; its full sequence is Glycogen synthase (474 aa).

Lys15 is a binding site for ADP-alpha-D-glucose.

Belongs to the glycosyltransferase 1 family. Bacterial/plant glycogen synthase subfamily.

It carries out the reaction [(1-&gt;4)-alpha-D-glucosyl](n) + ADP-alpha-D-glucose = [(1-&gt;4)-alpha-D-glucosyl](n+1) + ADP + H(+). The protein operates within glycan biosynthesis; glycogen biosynthesis. In terms of biological role, synthesizes alpha-1,4-glucan chains using ADP-glucose. This Finegoldia magna (strain ATCC 29328 / DSM 20472 / WAL 2508) (Peptostreptococcus magnus) protein is Glycogen synthase.